The sequence spans 197 residues: Pyridoxal 5'-phosphate synthase subunit PdxT (197 aa).

Residue 52-54 (GES) participates in L-glutamine binding. The active-site Nucleophile is Cys83. Residues Arg115 and 142–143 (IR) each bind L-glutamine. Catalysis depends on charge relay system residues His178 and Glu180.

This sequence belongs to the glutaminase PdxT/SNO family. In the presence of PdxS, forms a dodecamer of heterodimers. Only shows activity in the heterodimer.

It carries out the reaction aldehydo-D-ribose 5-phosphate + D-glyceraldehyde 3-phosphate + L-glutamine = pyridoxal 5'-phosphate + L-glutamate + phosphate + 3 H2O + H(+). It catalyses the reaction L-glutamine + H2O = L-glutamate + NH4(+). The protein operates within cofactor biosynthesis; pyridoxal 5'-phosphate biosynthesis. Functionally, catalyzes the hydrolysis of glutamine to glutamate and ammonia as part of the biosynthesis of pyridoxal 5'-phosphate. The resulting ammonia molecule is channeled to the active site of PdxS. The protein is Pyridoxal 5'-phosphate synthase subunit PdxT of Korarchaeum cryptofilum (strain OPF8).